We begin with the raw amino-acid sequence, 156 residues long: MNIIEANVATPDARVAITIARFNNFINDSLLEGAIDALKRIGQVKDENITVVWVPGAYELPLAAGALAKTGKYDAVIALGTVIRGGTAHFEYVAGGASNGLAHVAQDSEIPVAFGVLTTESIEQAIERAGTKAGNKGAEAALTALEMINVLKAIKA.

Residues Phe22, 57-59 (AYE), and 81-83 (TVI) each bind 5-amino-6-(D-ribitylamino)uracil. 86-87 (GT) lines the (2S)-2-hydroxy-3-oxobutyl phosphate pocket. The active-site Proton donor is His89. Phe114 provides a ligand contact to 5-amino-6-(D-ribitylamino)uracil. Arg128 provides a ligand contact to (2S)-2-hydroxy-3-oxobutyl phosphate.

The protein belongs to the DMRL synthase family. In terms of assembly, forms an icosahedral capsid composed of 60 subunits, arranged as a dodecamer of pentamers.

It catalyses the reaction (2S)-2-hydroxy-3-oxobutyl phosphate + 5-amino-6-(D-ribitylamino)uracil = 6,7-dimethyl-8-(1-D-ribityl)lumazine + phosphate + 2 H2O + H(+). It functions in the pathway cofactor biosynthesis; riboflavin biosynthesis; riboflavin from 2-hydroxy-3-oxobutyl phosphate and 5-amino-6-(D-ribitylamino)uracil: step 1/2. In terms of biological role, catalyzes the formation of 6,7-dimethyl-8-ribityllumazine by condensation of 5-amino-6-(D-ribitylamino)uracil with 3,4-dihydroxy-2-butanone 4-phosphate. This is the penultimate step in the biosynthesis of riboflavin. The chain is 6,7-dimethyl-8-ribityllumazine synthase from Citrobacter koseri (strain ATCC BAA-895 / CDC 4225-83 / SGSC4696).